Reading from the N-terminus, the 264-residue chain is 3-methyl-2-oxobutanoate hydroxymethyltransferase (264 aa).

Asp45 and Asp84 together coordinate Mg(2+). 3-methyl-2-oxobutanoate-binding positions include 45–46 (DS), Asp84, and Lys112. Residue Glu114 coordinates Mg(2+). Glu181 acts as the Proton acceptor in catalysis.

It belongs to the PanB family. In terms of assembly, homodecamer; pentamer of dimers. Requires Mg(2+) as cofactor.

The protein resides in the cytoplasm. It carries out the reaction 3-methyl-2-oxobutanoate + (6R)-5,10-methylene-5,6,7,8-tetrahydrofolate + H2O = 2-dehydropantoate + (6S)-5,6,7,8-tetrahydrofolate. It participates in cofactor biosynthesis; (R)-pantothenate biosynthesis; (R)-pantoate from 3-methyl-2-oxobutanoate: step 1/2. Catalyzes the reversible reaction in which hydroxymethyl group from 5,10-methylenetetrahydrofolate is transferred onto alpha-ketoisovalerate to form ketopantoate. The protein is 3-methyl-2-oxobutanoate hydroxymethyltransferase of Escherichia coli O127:H6 (strain E2348/69 / EPEC).